Here is a 513-residue protein sequence, read N- to C-terminus: Coiled-coil domain-containing protein 102B (513 aa).

Residues 1–217 form a required for centriolar localization and for interaction with CEP250, CROCC, LRRC45 and NEK2 region; it reads MNLDSIHRLI…IDSLKLSEEM (217 aa). A phosphoserine mark is found at S21, S22, S34, S135, S142, S194, and S210. Residues 72-142 adopt a coiled-coil conformation; the sequence is ELRLRELEEV…ELSTLKKKQS (71 aa). Coiled coils occupy residues 268–337 and 363–513; these read QKIL…ESKS and WDKR…LQNW. Phosphoserine is present on residues S401, S404, and S406. The disordered stretch occupies residues 493–513; sequence LDEEKERNENLETELRHLQNW.

As to quaternary structure, interacts (via N-terminus) with centriolar protein CEP250/CNAP1; the interaction results in recruitment of CCDC102B to the proximal ends of centrioles. Interacts (via N-terminus) with CROCC/rootletin and LRRC45. Interacts (via N-terminus) with serine/threonine-protein kinase NEK2; the interaction results in phosphorylation of CCDC102B. Post-translationally, phosphorylated directly or indirectly by NEK2 during mitosis which causes dissociation of CCDC102B from the centrosome and allows for centrosome separation.

Its subcellular location is the cytoplasm. It localises to the cytoskeleton. It is found in the microtubule organizing center. The protein resides in the centrosome. The protein localises to the centriole. In terms of biological role, during interphase, forms fibers at the proximal ends of centrioles to maintain centrosome cohesion. During mitosis, dissociates from the centrosome following phosphorylation to allow centrosome separation. Contributes to CROCC/rootletin filament formation. The chain is Coiled-coil domain-containing protein 102B (CCDC102B) from Homo sapiens (Human).